The primary structure comprises 203 residues: DNA-binding transcriptional repressor ScoC (203 aa).

An HTH marR-type domain is found at 13-157; it reads ALVFTQKMAQ…MMCMIRHIYG (145 aa). Residues 63-86 constitute a DNA-binding region (H-T-H motif); that stretch reads ISEIAKFGVMHVSTAFNFSKKLEE. The interval 183–203 is disordered; it reads KKKAKDSAADEPAEELEPVNS. Acidic residues predominate over residues 191–203; it reads ADEPAEELEPVNS.

In terms of assembly, homodimer. Interacts with SinR.

In terms of biological role, negative regulator of protease production and sporulation. Acts by binding directly to the promoter of protease genes (aprE and nprE), and by repressing oligopeptide permease operons (appABCDF and oppABCDF), thereby preventing uptake of oligopeptides required for initiation of sporulation. Acts with SinR as a corepressor of epr expression. Binds to non-m6A-5-methylated 5'-GACGAG-3' sites, tested with scpA; when the target is methylated by DnmA, this repressor no longer binds and transcription is up-regulated. The polypeptide is DNA-binding transcriptional repressor ScoC (Bacillus subtilis (strain 168)).